Reading from the N-terminus, the 503-residue chain is UDP-N-acetylmuramoylalanine--D-glutamate ligase (503 aa).

129–135 (GTNGKTT) is an ATP binding site.

This sequence belongs to the MurCDEF family.

The protein resides in the cytoplasm. The enzyme catalyses UDP-N-acetyl-alpha-D-muramoyl-L-alanine + D-glutamate + ATP = UDP-N-acetyl-alpha-D-muramoyl-L-alanyl-D-glutamate + ADP + phosphate + H(+). Its pathway is cell wall biogenesis; peptidoglycan biosynthesis. Cell wall formation. Catalyzes the addition of glutamate to the nucleotide precursor UDP-N-acetylmuramoyl-L-alanine (UMA). This chain is UDP-N-acetylmuramoylalanine--D-glutamate ligase, found in Burkholderia vietnamiensis (strain G4 / LMG 22486) (Burkholderia cepacia (strain R1808)).